The sequence spans 456 residues: Ribosome assembly protein METTL17, mitochondrial (456 aa).

Residues 1–19 (MAAALKCLLTLGRWCPGLG) constitute a mitochondrion transit peptide. Residues Cys333, Cys339, Cys347, and Cys404 each contribute to the [4Fe-4S] cluster site.

It belongs to the methyltransferase superfamily. Rsm22 family. In terms of assembly, associates with the mitochondrial ribosome (mitoribosome).

The protein resides in the mitochondrion matrix. Functionally, mitochondrial ribosome (mitoribosome) assembly factor. Binds at the interface of the head and body domains of the mitochondrial small ribosomal subunit (mt-SSU), occluding the mRNA channel and preventing compaction of the head domain towards the body. Probable inactive methyltransferase: retains the characteristic folding and ability to bind S-adenosyl-L-methionine, but it probably lost its methyltransferase activity. The sequence is that of Ribosome assembly protein METTL17, mitochondrial from Homo sapiens (Human).